A 438-amino-acid polypeptide reads, in one-letter code: MEILVFMDSYGLSTQLSMETLHGSLTDPAISSMNLLNELIDEYPVAISMAAGRPYEEFFDVRLIHEYIDAYCDHLRHDRKLAEAVVTRTLFQYGTTKGIIADLIARNLAEDENIDAAAESVVVTVGAQEAMFLILRTLRADERDVLLAPAPTYVGLTGAALLTDTPVWPVQSTANGVDPEDLVLQLKRADEQGKRVRACYVTPNFANPTGTSMDLPARHRLLEVAEANGILLLEDNAYGLFGSERLPSLKSLDRSGNVVYIGSFAKTGMPGARVGYVVADQRVAGGGLLADQLSKLKGMLTVNTSPIAQAVIAGKLLLNDFSLTKANAREIAIYQRNLQLTLSELERTLGGLPEVGWNTPTGGFFVTVTVPFVVDDELLAHAARDHGVLFTPMHHFYGGKDGFNQLRLSISLLTPELIKEGVTRLAALITARLRWPRA.

Lys-266 carries the N6-(pyridoxal phosphate)lysine modification.

Belongs to the class-I pyridoxal-phosphate-dependent aminotransferase family. Pyridoxal 5'-phosphate serves as cofactor.

The catalysed reaction is (S)-3,5-dihydroxyphenylglycine + 2-oxoglutarate = 2-(3,5-dihydroxyphenyl)-2-oxoacetate + L-glutamate. The protein operates within antibiotic biosynthesis; vancomycin biosynthesis. Its function is as follows. Catalyzes the transamination of p-hydroxybenzoylformate to L-p-hydroxyphenylglycine as part of the biosynthesis of the (S)-3,5-dihydroxyphenylglycine constituent of the glycopeptide antibiotic chloroeremomycin, a member of the vancomycin group of antibiotics. The sequence is that of (S)-3,5-dihydroxyphenylglycine transaminase (hpgT) from Amycolatopsis orientalis (Nocardia orientalis).